Reading from the N-terminus, the 106-residue chain is Iron-sulfur cluster assembly protein CyaY (106 aa).

It belongs to the frataxin family.

Functionally, involved in iron-sulfur (Fe-S) cluster assembly. May act as a regulator of Fe-S biogenesis. In Salmonella newport (strain SL254), this protein is Iron-sulfur cluster assembly protein CyaY.